The sequence spans 1118 residues: Cytospin-A (1118 aa).

The segment at 1 to 176 (MKKASRSVGS…SKSKSDNQIS (176 aa)) is disordered. Polar residues predominate over residues 29 to 52 (ESGSSLSAVTKLSKPGTSASLLKT). The segment covering 79 to 119 (STCASTVSSTTGTTMSTLENKPRTVAGSTARRSTSSGTKES) has biased composition (low complexity). Composition is skewed to basic and acidic residues over residues 120-131 (SSSRERIRDRSR) and 158-171 (TNPESDIRMSKSKS). Positions 193-281 (KTKDVEILHL…LNALGFSLEQ (89 aa)) form a coiled coil. Disordered stretches follow at residues 299–324 (ITAGNHSDGGGTLTSSVEGSAPGSME) and 359–391 (SSDDALDAPSSSESEGVPSIERSRKGSSGNASE). Residues 359 to 373 (SSDDALDAPSSSESE) are compositionally biased toward low complexity. 2 coiled-coil regions span residues 396 to 450 (CLTE…MESL) and 488 to 808 (RYME…RGRV). 2 disordered regions span residues 856 to 879 (PSPAAATIPRTPLSPSPMKTPPAA) and 921 to 1002 (TSST…RKDP). The segment covering 937-946 (ESAKSISVSR) has biased composition (low complexity). A compositionally biased stretch (basic and acidic residues) spans 947-957 (RSSEEIKRDIS). Over residues 972–991 (TTSPQLSLSSSPTASVTPTT) the composition is skewed to low complexity. In terms of domain architecture, Calponin-homology (CH) spans 1012 to 1117 (GSKRNALLKW…YVTAIYKYFE (106 aa)).

It belongs to the cytospin-A family. In terms of assembly, may interact with both microtubules and actin cytoskeleton.

The protein resides in the cytoplasm. It localises to the cytoskeleton. It is found in the spindle. The protein localises to the cell junction. Its subcellular location is the gap junction. Its function is as follows. Involved in cytokinesis and spindle organization. May play a role in actin cytoskeleton organization and microtubule stabilization and hence required for proper cell adhesion and migration. In Gallus gallus (Chicken), this protein is Cytospin-A (SPECC1L).